Consider the following 202-residue polypeptide: Thymidylate kinase (202 aa).

7 to 14 is a binding site for ATP; the sequence is GIDGSGKT.

It belongs to the thymidylate kinase family.

The catalysed reaction is dTMP + ATP = dTDP + ADP. In terms of biological role, phosphorylation of dTMP to form dTDP in both de novo and salvage pathways of dTTP synthesis. This Ehrlichia ruminantium (strain Gardel) protein is Thymidylate kinase.